A 192-amino-acid polypeptide reads, in one-letter code: Flavin prenyltransferase UbiX (192 aa).

FMN contacts are provided by residues 10–12 (GAS), serine 36, 92–95 (SVAT), and arginine 127. Residues tyrosine 157 and lysine 173 each coordinate dimethylallyl phosphate.

The protein belongs to the UbiX/PAD1 family.

The catalysed reaction is dimethylallyl phosphate + FMNH2 = prenylated FMNH2 + phosphate. Flavin prenyltransferase that catalyzes the synthesis of the prenylated FMN cofactor (prenyl-FMN) for 4-hydroxy-3-polyprenylbenzoic acid decarboxylase UbiD. The prenyltransferase is metal-independent and links a dimethylallyl moiety from dimethylallyl monophosphate (DMAP) to the flavin N5 and C6 atoms of FMN. The sequence is that of Flavin prenyltransferase UbiX from Chlamydia muridarum (strain MoPn / Nigg).